The chain runs to 93 residues: HIG1 domain family member 1A, mitochondrial (93 aa).

An N-acetylserine modification is found at Ser-2. An HIG1 domain is found at 2–93; sequence STNTDLSLSS…YQEFWAKRKP (92 aa). Ser-8 is modified (phosphoserine). The next 2 membrane-spanning stretches (helical) occupy residues 28–48 and 69–89; these read PFVP…LYKL and GFVV…EFWA. Topologically, residues 90–93 are mitochondrial matrix; the sequence is KRKP.

As to quaternary structure, associates with cytochrome c oxidase (COX, complex IV); proposed complex component. Also associates with respiratory chain supercomplexes. As to expression, expressed in brain and spinal cord.

The protein resides in the mitochondrion membrane. It localises to the mitochondrion inner membrane. Its function is as follows. Proposed subunit of cytochrome c oxidase (COX, complex IV), which is the terminal component of the mitochondrial respiratory chain that catalyzes the reduction of oxygen to water. May play a role in the assembly of respiratory supercomplexes. This chain is HIG1 domain family member 1A, mitochondrial (Higd1a), found in Rattus norvegicus (Rat).